The sequence spans 338 residues: Fructose-1,6-bisphosphatase 1 (338 aa).

Alanine 2 carries the N-acetylalanine modification. AMP-binding positions include 18-22 (VMEEG) and 28-32 (TGEMT). Aspartate 69 and glutamate 98 together coordinate Mg(2+). Residue 113 to 114 (KY) coordinates AMP. Mg(2+) contacts are provided by aspartate 119, leucine 121, and aspartate 122. 122–125 (DGSS) contributes to the substrate binding site. Arginine 141 contacts AMP. Lysine 151 carries the N6-succinyllysine modification. Substrate contacts are provided by residues 213–216 (NEGY), 244–249 (RYVGSM), tyrosine 265, and 275–277 (KLR). Residues tyrosine 216, tyrosine 245, and tyrosine 265 each carry the phosphotyrosine modification. Position 281 (glutamate 281) interacts with Mg(2+).

This sequence belongs to the FBPase class 1 family. As to quaternary structure, homotetramer. The cofactor is Mg(2+).

The catalysed reaction is beta-D-fructose 1,6-bisphosphate + H2O = beta-D-fructose 6-phosphate + phosphate. Its pathway is carbohydrate biosynthesis; gluconeogenesis. Its activity is regulated as follows. Subject to complex allosteric regulation. The enzyme can assume an active R-state, or an inactive T-state. Intermediate conformations may exist. AMP acts as an allosteric inhibitor. AMP binding affects the turnover of bound substrate and not the affinity for substrate. Fructose 2,6-bisphosphate acts as a competitive inhibitor. Fructose 2,6-bisphosphate and AMP have synergistic effects. Functionally, catalyzes the hydrolysis of fructose 1,6-bisphosphate to fructose 6-phosphate in the presence of divalent cations, acting as a rate-limiting enzyme in gluconeogenesis. Plays a role in regulating glucose sensing and insulin secretion of pancreatic beta-cells. Appears to modulate glycerol gluconeogenesis in liver. Important regulator of appetite and adiposity; increased expression of the protein in liver after nutrient excess increases circulating satiety hormones and reduces appetite-stimulating neuropeptides and thus seems to provide a feedback mechanism to limit weight gain. The chain is Fructose-1,6-bisphosphatase 1 (FBP1) from Oryctolagus cuniculus (Rabbit).